A 460-amino-acid polypeptide reads, in one-letter code: MLKIYNSISRDKQEFKPINPGKIGMYVCGVTIYDLCHIGHGRTFVSFDMIVRYLRYIGYEVNFQRNITDVDDKIIKRAAENNESCESLTERLIAEMHQDFDALNMKRPDFEPRATLHIEEIIDMVQRLLDRDHAYVASNGDVLFSVASFPEYGQLSGQNLDQLQAGARVEIDNAKRNPMDFVLWKMSKPGEPTWESPWGPGRPGWHIECSAMNSKHLGLHFDIHGGGSDLQFPHHENEIAQSCCAHDTPYVNYWMHTGMVMVDREKMSKSLDNFFTIRDVLKHYDAETVRYFLLSGHYRSQLNYSEDNLKQARAALERLYTALKGLDLTVDAAPAEAFVAKFKSAMDDDFNTPEAYSVLFEMVREINRLKTTDMAEASALGVSLKQLADVLGLISQTPEAFFKGEGSDDEVAEIEALIVERNRARTEKDWPAADVARDRLNELGVELEDGGPSGTTWRKK.

C28 contributes to the Zn(2+) binding site. Positions 30–40 match the 'HIGH' region motif; the sequence is VTIYDLCHIGH. Positions 209, 234, and 238 each coordinate Zn(2+). Positions 266–270 match the 'KMSKS' region motif; the sequence is KMSKS. K269 provides a ligand contact to ATP.

The protein belongs to the class-I aminoacyl-tRNA synthetase family. In terms of assembly, monomer. Zn(2+) is required as a cofactor.

It is found in the cytoplasm. It catalyses the reaction tRNA(Cys) + L-cysteine + ATP = L-cysteinyl-tRNA(Cys) + AMP + diphosphate. The sequence is that of Cysteine--tRNA ligase from Shewanella frigidimarina (strain NCIMB 400).